The chain runs to 92 residues: Small ribosomal subunit protein uS19 (92 aa).

This sequence belongs to the universal ribosomal protein uS19 family.

Functionally, protein S19 forms a complex with S13 that binds strongly to the 16S ribosomal RNA. The protein is Small ribosomal subunit protein uS19 of Pelobacter propionicus (strain DSM 2379 / NBRC 103807 / OttBd1).